Consider the following 361-residue polypeptide: MTARLRPVLAGLPVYVPGKTVPGAIKLASNETVFGPLPSVRAAIEHATQSINRYPDNGCLAVKAALARHVSSLSAADFGPEHIAVGCGSVSLCQQLVQITASVGDEVIFGWRSFELYPPQVQVAGATAIQVPLTNHTFDLEAMLAAVTERTRLIIVCNPNNPTSTVVQPEALAEFVRSVPPHILVAIDEAYVEYLRDGTVPDSPHLVRTHSNVVVLRTFSKAYGLAGLRVGYAVGQPDVIAALDKVYVPFTVSSLAQAAAIASVQAADELLARTDAVVAERGRVSAELRAAGFTVPPSQANFVWLPLEDRTTDFVTQAAKAHIVVRPYGADGVRVTIAAPEENDALLRFARCWITHRDGAR.

Lysine 221 carries the post-translational modification N6-(pyridoxal phosphate)lysine.

The protein belongs to the class-II pyridoxal-phosphate-dependent aminotransferase family. Homodimer. Pyridoxal 5'-phosphate is required as a cofactor.

It carries out the reaction an aromatic L-alpha-amino acid + 2-oxoglutarate = an aromatic oxo-acid + L-glutamate. Functionally, aminotransferase that catalyzes the conversion of aromatic amino acids and 2-oxoglutarate into corresponding aromatic oxo acids and L-glutamate. The protein is Aromatic amino acid aminotransferase of Mycobacterium marinum (strain ATCC BAA-535 / M).